Here is a 392-residue protein sequence, read N- to C-terminus: Elongation factor Tu (392 aa).

In terms of domain architecture, tr-type G spans 10-202 (KVHVNVGTIG…VLDEYIEDPI (193 aa)). Residues 19–26 (GHVDHGKT) are G1. 19-26 (GHVDHGKT) lines the GTP pocket. Position 26 (Thr26) interacts with Mg(2+). The interval 60–64 (GITIN) is G2. Residues 81-84 (DCPG) form a G3 region. Residues 81 to 85 (DCPGH) and 136 to 139 (NKCD) each bind GTP. A G4 region spans residues 136-139 (NKCD). Positions 174-176 (SAL) are G5.

The protein belongs to the TRAFAC class translation factor GTPase superfamily. Classic translation factor GTPase family. EF-Tu/EF-1A subfamily. In terms of assembly, monomer.

The protein resides in the cytoplasm. It carries out the reaction GTP + H2O = GDP + phosphate + H(+). Its function is as follows. GTP hydrolase that promotes the GTP-dependent binding of aminoacyl-tRNA to the A-site of ribosomes during protein biosynthesis. This Phytoplasma mali (strain AT) protein is Elongation factor Tu.